Reading from the N-terminus, the 324-residue chain is IDS-like terpene synthase 2 (324 aa).

D77 and D81 together coordinate Mg(2+).

Belongs to the FPP/GGPP synthase family. Requires Mg(2+) as cofactor.

It carries out the reaction (2E)-geranyl diphosphate = (E)-beta-ocimene + diphosphate. It catalyses the reaction (2E,6E)-farnesyl diphosphate = (3E,6E)-alpha-farnesene + diphosphate. The enzyme catalyses (2E,6E,10E)-geranylgeranyl diphosphate = (E,E,E)-alpha-springene + diphosphate. Its function is as follows. Terpene synthase that shows monoterpene synthase activity and produces (E)-beta-ocimene as a major product, using geranyl diphosphate (GPP) as substrate. Also shows sesquiterpene synthase activity as it is able to convert farnesyl diphosphate (FPP) into (E,E)-alpha-farnesene. Finally, TPS2 can convert geranylgeranyl diphosphate into (E,E,E)-alpha-springene. The sequence is that of IDS-like terpene synthase 2 from Melampsora lini (Rust fungus).